Here is a 283-residue protein sequence, read N- to C-terminus: MSSNPSSVEKKLLHYTGKAIADFNMIQRGDRVMVCLSGGKDSFTLLTILNQLRIKSGNKFEIFAFTLDQAQPGWNDACLRQWLAEKSIPHEILTRDTYSIVKEKIPEGKTYCSLCSRLRRGIIYRYAEENGFNKIALGHHRDDLIRTLMMSILYNGDIRSMPPKLLSDNKKHIVIRPLCYVQEKDIITFASEQAFPIIPCNLCGSQENLMRKKVASLIDQLAIENPKVPSNMLHALQSLKPSQLMDQNFWNFKNLEDGLETAQSIQCEEVFNAQEFEIEDEKI.

Positions serine 37–serine 42 match the PP-loop motif motif. The [4Fe-4S] cluster site is built by cysteine 112, cysteine 115, and cysteine 203.

This sequence belongs to the TtcA family. Homodimer. The cofactor is Mg(2+). Requires [4Fe-4S] cluster as cofactor.

It localises to the cytoplasm. It carries out the reaction cytidine(32) in tRNA + S-sulfanyl-L-cysteinyl-[cysteine desulfurase] + AH2 + ATP = 2-thiocytidine(32) in tRNA + L-cysteinyl-[cysteine desulfurase] + A + AMP + diphosphate + H(+). It functions in the pathway tRNA modification. In terms of biological role, catalyzes the ATP-dependent 2-thiolation of cytidine in position 32 of tRNA, to form 2-thiocytidine (s(2)C32). The sulfur atoms are provided by the cysteine/cysteine desulfurase (IscS) system. The chain is tRNA-cytidine(32) 2-sulfurtransferase from Legionella pneumophila (strain Paris).